Consider the following 800-residue polypeptide: MAVRELCFPRQRQVLFLFLFWGVSLAGSGFGRYSVTEETEKGSFVVNLAKDLGLAEGELAARGTRVVSDDNKQYLLLDSHTGNLLTNEKLDREKLCGPKEPCMLYFQILMDDPFQIYRAELRVRDINDHAPVFQDKETVLKISENTAEGTAFRLERAQDPDGGLNGIQNYTISPNSFFHINISGGDEGMIYPELVLDKALDREEQGELSLTLTALDGGSPSRSGTSTVRIVVLDVNDNAPQFAQALYETQAPENSPIGFLIVKVWAEDVDSGVNAEVSYSFFDASENIRTTFQINPFSGEIFLRELLDYELVNSYKINIQAMDGGGLSARCRVLVEVLDTNDNPPELIVSSFSNSVAENSPETPLAVFKINDRDSGENGKMVCYIQENLPFLLKPSVENFYILITEGALDREIRAEYNITITVTDLGTPRLKTEHNITVLVSDVNDNAPAFTQTSYTLFVRENNSPALHIGSVSATDRDSGTNAQVTYSLLPPQDPHLPLASLVSINADNGHLFALRSLDYEALQAFEFRVGATDRGSPALSREALVRVLVLDANDNSPFVLYPLQNGSAPCTELVPRAAEPGYLVTKVVAVDGDSGQNAWLSYQLLKATEPGLFGVWAHNGEVRTARLLSERDAAKHRLVVLVKDNGEPPRSATATLHLLLVDGFSQPYLPLPEAAPAQAQAEADLLTVYLVVALASVSSLFLLSVLLFVAVRLCRRSRAASVGRCSVPEGPFPGHLVDVRGAETLSQSYQYEVCLTGGPGTSEFKFLKPVISDIQAQGPGRKGEENSTFRNSFGFNIQ.

An N-terminal signal peptide occupies residues 1–26 (MAVRELCFPRQRQVLFLFLFWGVSLA). Topologically, residues 27–692 (GSGFGRYSVT…AEADLLTVYL (666 aa)) are extracellular. 5 Cadherin domains span residues 35–133 (VTEE…APVF), 138–242 (TVLK…APQF), 247–347 (YETQ…PPEL), 352–451 (FSNS…APAF), and 456–561 (YTLF…SPFV). N169 and N181 each carry an N-linked (GlcNAc...) asparagine glycan. N-linked (GlcNAc...) asparagine glycans are attached at residues N418 and N436. Residue N567 is glycosylated (N-linked (GlcNAc...) asparagine). The Cadherin 6 domain maps to 568–671 (GSAPCTELVP…LVDGFSQPYL (104 aa)). Residues 693–713 (VVALASVSSLFLLSVLLFVAV) form a helical membrane-spanning segment. The Cytoplasmic portion of the chain corresponds to 714–800 (RLCRRSRAAS…FRNSFGFNIQ (87 aa)).

It localises to the cell membrane. Its function is as follows. Potential calcium-dependent cell-adhesion protein. May be involved in the establishment and maintenance of specific neuronal connections in the brain. This chain is Protocadherin beta-10 (PCDHB10), found in Homo sapiens (Human).